An 852-amino-acid chain; its full sequence is Phenylalanine--tRNA ligase beta subunit (852 aa).

Residues 44–159 form the tRNA-binding domain; that stretch reads PETTGPLVIG…DADLASANLK (116 aa). The B5 domain occupies 428–510; sequence PEMPMITIHT…RLEGLEDIPS (83 aa). Residues Asp488, Asp494, Glu497, and Glu498 each contribute to the Mg(2+) site. Residues 758-851 enclose the FDX-ACB domain; it reads SAFPAVLQDI…ATEKVGAQLR (94 aa).

The protein belongs to the phenylalanyl-tRNA synthetase beta subunit family. Type 1 subfamily. As to quaternary structure, tetramer of two alpha and two beta subunits. The cofactor is Mg(2+).

It is found in the cytoplasm. It catalyses the reaction tRNA(Phe) + L-phenylalanine + ATP = L-phenylalanyl-tRNA(Phe) + AMP + diphosphate + H(+). The chain is Phenylalanine--tRNA ligase beta subunit from Corynebacterium jeikeium (strain K411).